Here is a 777-residue protein sequence, read N- to C-terminus: Elongation factor G, mitochondrial (777 aa).

Residues L34–M338 enclose the tr-type G domain. Residues A43–T50, D136–H140, and N190–D193 contribute to the GTP site.

Belongs to the TRAFAC class translation factor GTPase superfamily. Classic translation factor GTPase family. EF-G/EF-2 subfamily.

It is found in the mitochondrion. It participates in protein biosynthesis; polypeptide chain elongation. Functionally, mitochondrial GTPase that catalyzes the GTP-dependent ribosomal translocation step during translation elongation. During this step, the ribosome changes from the pre-translocational (PRE) to the post-translocational (POST) state as the newly formed A-site-bound peptidyl-tRNA and P-site-bound deacylated tRNA move to the P and E sites, respectively. Catalyzes the coordinated movement of the two tRNA molecules, the mRNA and conformational changes in the ribosome. The protein is Elongation factor G, mitochondrial of Malassezia globosa (strain ATCC MYA-4612 / CBS 7966) (Dandruff-associated fungus).